A 166-amino-acid chain; its full sequence is EEF1A lysine methyltransferase 1 (166 aa).

The protein belongs to the class I-like SAM-binding methyltransferase superfamily. EFM5 family.

It localises to the cytoplasm. It carries out the reaction L-lysyl-[protein] + 3 S-adenosyl-L-methionine = N(6),N(6),N(6)-trimethyl-L-lysyl-[protein] + 3 S-adenosyl-L-homocysteine + 3 H(+). Its function is as follows. Protein-lysine methyltransferase that selectively catalyzes the trimethylation of EEF1A at 'Lys-79'. The protein is EEF1A lysine methyltransferase 1 of Danio rerio (Zebrafish).